The sequence spans 162 residues: NADH-quinone oxidoreductase subunit I (162 aa).

4Fe-4S ferredoxin-type domains lie at 52-82 and 93-122; these read LRRYPNGEERCIACKLCEAVCPAQAITIEAG and VRYDIDMVKCIYCGLCQEACPVDAIVEGPN. Positions 62, 65, 68, 72, 102, 105, 108, and 112 each coordinate [4Fe-4S] cluster.

This sequence belongs to the complex I 23 kDa subunit family. NDH-1 is composed of 14 different subunits. Subunits NuoA, H, J, K, L, M, N constitute the membrane sector of the complex. Requires [4Fe-4S] cluster as cofactor.

The protein resides in the cell inner membrane. It catalyses the reaction a quinone + NADH + 5 H(+)(in) = a quinol + NAD(+) + 4 H(+)(out). Functionally, NDH-1 shuttles electrons from NADH, via FMN and iron-sulfur (Fe-S) centers, to quinones in the respiratory chain. The immediate electron acceptor for the enzyme in this species is believed to be ubiquinone. Couples the redox reaction to proton translocation (for every two electrons transferred, four hydrogen ions are translocated across the cytoplasmic membrane), and thus conserves the redox energy in a proton gradient. The sequence is that of NADH-quinone oxidoreductase subunit I from Nitrobacter winogradskyi (strain ATCC 25391 / DSM 10237 / CIP 104748 / NCIMB 11846 / Nb-255).